Here is a 295-residue protein sequence, read N- to C-terminus: Ribosomal RNA small subunit methyltransferase A (295 aa).

S-adenosyl-L-methionine-binding residues include N29, L31, G56, E77, D102, and N128.

The protein belongs to the class I-like SAM-binding methyltransferase superfamily. rRNA adenine N(6)-methyltransferase family. RsmA subfamily.

Its subcellular location is the cytoplasm. It catalyses the reaction adenosine(1518)/adenosine(1519) in 16S rRNA + 4 S-adenosyl-L-methionine = N(6)-dimethyladenosine(1518)/N(6)-dimethyladenosine(1519) in 16S rRNA + 4 S-adenosyl-L-homocysteine + 4 H(+). Specifically dimethylates two adjacent adenosines (A1518 and A1519) in the loop of a conserved hairpin near the 3'-end of 16S rRNA in the 30S particle. May play a critical role in biogenesis of 30S subunits. In Listeria innocua serovar 6a (strain ATCC BAA-680 / CLIP 11262), this protein is Ribosomal RNA small subunit methyltransferase A.